A 376-amino-acid chain; its full sequence is NIF3-like protein 1 (376 aa).

Lys-108 is subject to N6-acetyllysine. Residues 243–376 (LLLHTGMGRL…ETDRDPLRVV (134 aa)) form a mediates interaction with COPS2 region. At Thr-254 the chain carries Phosphothreonine. Ser-258 is modified (phosphoserine).

The protein belongs to the GTP cyclohydrolase I type 2/NIF3 family. In terms of assembly, homodimer. Interacts with COPS2. Interacts with THOC7.

The protein localises to the cytoplasm. It localises to the nucleus. Its function is as follows. May function as a transcriptional corepressor through its interaction with COPS2, negatively regulating the expression of genes involved in neuronal differentiation. The sequence is that of NIF3-like protein 1 from Rattus norvegicus (Rat).